A 291-amino-acid chain; its full sequence is G1/S-specific cyclin-D1 (291 aa).

Residue threonine 282 is modified to Phosphothreonine.

The protein belongs to the cyclin family. Cyclin D subfamily. Interacts with the CDK4 and CDK6 protein kinases to form a serine/threonine kinase holoenzyme complex. The cyclin subunit imparts substrate specificity to the complex. Phosphorylation at Thr-282 by MAP kinases is required for ubiquitination and degradation by the DCX(AMBRA1) complex. In terms of processing, ubiquitinated by the DCX(AMBRA1) complex during the transition from G1 to S cell phase, leading to its degradation. The DCX(AMBRA1) complex represents the major regulator of CCND1 stability during the G1/S transition.

It localises to the nucleus. The protein localises to the cytoplasm. In terms of biological role, regulatory component of the cyclin D1-CDK4 (DC) complex that phosphorylates and inhibits members of the retinoblastoma (RB) protein family including RB1 and regulates the cell-cycle during G(1)/S transition. Phosphorylation of RB1 allows dissociation of the transcription factor E2F from the RB/E2F complex and the subsequent transcription of E2F target genes which are responsible for the progression through the G(1) phase. Hypophosphorylates RB1 in early G(1) phase. Cyclin D-CDK4 complexes are major integrators of various mitogenenic and antimitogenic signals. The chain is G1/S-specific cyclin-D1 (ccnd1) from Danio rerio (Zebrafish).